Reading from the N-terminus, the 565-residue chain is NAD-dependent malic enzyme (565 aa).

Y104 (proton donor) is an active-site residue. NAD(+) is bound at residue R157. K175 (proton acceptor) is an active-site residue. A divalent metal cation is bound by residues E246, D247, and D270. NAD(+) is bound by residues D270 and N418.

The protein belongs to the malic enzymes family. As to quaternary structure, homotetramer. The cofactor is Mg(2+). Requires Mn(2+) as cofactor.

It carries out the reaction (S)-malate + NAD(+) = pyruvate + CO2 + NADH. It catalyses the reaction oxaloacetate + H(+) = pyruvate + CO2. The protein is NAD-dependent malic enzyme of Escherichia coli (strain K12 / MC4100 / BW2952).